We begin with the raw amino-acid sequence, 122 residues long: Fluoride-specific ion channel FluC 2 (122 aa).

A run of 4 helical transmembrane segments spans residues 4-24, 38-58, 63-83, and 96-116; these read VAVW…RFVV, LGTL…GGLA, AALL…TWML, and AALA…FIGQ. The Na(+) site is built by G73 and T76.

The protein belongs to the fluoride channel Fluc/FEX (TC 1.A.43) family.

It is found in the cell membrane. It catalyses the reaction fluoride(in) = fluoride(out). Na(+) is not transported, but it plays an essential structural role and its presence is essential for fluoride channel function. Functionally, fluoride-specific ion channel. Important for reducing fluoride concentration in the cell, thus reducing its toxicity. The polypeptide is Fluoride-specific ion channel FluC 2 (Mycolicibacterium paratuberculosis (strain ATCC BAA-968 / K-10) (Mycobacterium paratuberculosis)).